The chain runs to 122 residues: MARLAGVDLPRNKRMEIALTYIYGIGPARAKQLLEETGVSPDLRTDNLTDEQIASLRDVIEATWKVEGDLRREVQADIRRKIEIGSYQGLRHRRGLPVRGQRTKTNARTRKGPKKTIAGKKK.

Positions 93–122 are disordered; it reads RRGLPVRGQRTKTNARTRKGPKKTIAGKKK.

It belongs to the universal ribosomal protein uS13 family. In terms of assembly, part of the 30S ribosomal subunit. Forms a loose heterodimer with protein S19. Forms two bridges to the 50S subunit in the 70S ribosome.

Functionally, located at the top of the head of the 30S subunit, it contacts several helices of the 16S rRNA. In the 70S ribosome it contacts the 23S rRNA (bridge B1a) and protein L5 of the 50S subunit (bridge B1b), connecting the 2 subunits; these bridges are implicated in subunit movement. Contacts the tRNAs in the A and P-sites. The polypeptide is Small ribosomal subunit protein uS13 (Corynebacterium efficiens (strain DSM 44549 / YS-314 / AJ 12310 / JCM 11189 / NBRC 100395)).